A 377-amino-acid polypeptide reads, in one-letter code: Glutamate 5-kinase (377 aa).

K18 is an ATP binding site. Residues S55, D142, and N154 each contribute to the substrate site. ATP contacts are provided by residues 174–175 and 216–222; these read SD and TGGMKSK. Positions 281–359 constitute a PUA domain; the sequence is QGEVVVDAGA…REIEALLGYK (79 aa).

This sequence belongs to the glutamate 5-kinase family.

Its subcellular location is the cytoplasm. The enzyme catalyses L-glutamate + ATP = L-glutamyl 5-phosphate + ADP. Its pathway is amino-acid biosynthesis; L-proline biosynthesis; L-glutamate 5-semialdehyde from L-glutamate: step 1/2. Functionally, catalyzes the transfer of a phosphate group to glutamate to form L-glutamate 5-phosphate. This Meiothermus ruber protein is Glutamate 5-kinase.